We begin with the raw amino-acid sequence, 347 residues long: Aspartate-semialdehyde dehydrogenase (347 aa).

Residues 13–16 (TGAV) and 41–42 (RS) contribute to the NADP(+) site. Residue R101 participates in phosphate binding. C132 acts as the Acyl-thioester intermediate in catalysis. Residue Q159 coordinates substrate. 162 to 163 (SG) contacts NADP(+). Phosphate is bound at residue K216. R238 contacts substrate. Residue H245 is the Proton acceptor of the active site. N319 serves as a coordination point for NADP(+).

Belongs to the aspartate-semialdehyde dehydrogenase family. Homodimer.

The enzyme catalyses L-aspartate 4-semialdehyde + phosphate + NADP(+) = 4-phospho-L-aspartate + NADPH + H(+). Its pathway is amino-acid biosynthesis; L-lysine biosynthesis via DAP pathway; (S)-tetrahydrodipicolinate from L-aspartate: step 2/4. The protein operates within amino-acid biosynthesis; L-methionine biosynthesis via de novo pathway; L-homoserine from L-aspartate: step 2/3. It participates in amino-acid biosynthesis; L-threonine biosynthesis; L-threonine from L-aspartate: step 2/5. In terms of biological role, catalyzes the NADPH-dependent formation of L-aspartate-semialdehyde (L-ASA) by the reductive dephosphorylation of L-aspartyl-4-phosphate. The chain is Aspartate-semialdehyde dehydrogenase from Legionella pneumophila.